Here is a 186-residue protein sequence, read N- to C-terminus: Elongation factor P (186 aa).

This sequence belongs to the elongation factor P family.

The protein localises to the cytoplasm. It participates in protein biosynthesis; polypeptide chain elongation. In terms of biological role, involved in peptide bond synthesis. Stimulates efficient translation and peptide-bond synthesis on native or reconstituted 70S ribosomes in vitro. Probably functions indirectly by altering the affinity of the ribosome for aminoacyl-tRNA, thus increasing their reactivity as acceptors for peptidyl transferase. This chain is Elongation factor P, found in Shewanella woodyi (strain ATCC 51908 / MS32).